A 327-amino-acid chain; its full sequence is Fructose-1,6-bisphosphatase class 1 (327 aa).

Mg(2+) contacts are provided by E84, D103, L105, and D106. Substrate-binding positions include D106–S109, N197, and K263. Position 269 (E269) interacts with Mg(2+).

The protein belongs to the FBPase class 1 family. In terms of assembly, homotetramer. Requires Mg(2+) as cofactor.

It localises to the cytoplasm. It carries out the reaction beta-D-fructose 1,6-bisphosphate + H2O = beta-D-fructose 6-phosphate + phosphate. It participates in carbohydrate biosynthesis; gluconeogenesis. This chain is Fructose-1,6-bisphosphatase class 1, found in Idiomarina loihiensis (strain ATCC BAA-735 / DSM 15497 / L2-TR).